Consider the following 217-residue polypeptide: Fucoxanthin-chlorophyll a-c binding protein A, chloroplastic (217 aa).

The transit peptide at 1 to 39 (MKSAVMAVACAAAPGLRRPSAFNGAALTTSAKSSSAMKM) directs the protein to the chloroplast. 3 consecutive transmembrane segments (helical) span residues 81–101 (IAML…PGML), 122–142 (IPPA…LAVM), and 183–203 (GRAA…NNKP).

This sequence belongs to the fucoxanthin chlorophyll protein family. In terms of assembly, the LHC complex of chromophytic algae is composed of fucoxanthin, chlorophyll A and C bound non-covalently by fucoxanthin chlorophyll proteins (FCPs). The ratio of pigments in this LHC is; fucoxanthin: chlorophyll C: chlorophyll A; (0.6-1): (0.1-0.3): (1).

The protein localises to the plastid. The protein resides in the chloroplast thylakoid membrane. Its function is as follows. The light-harvesting complex (LHC) functions as a light receptor, it captures and delivers excitation energy to photosystems with which it is closely associated. Energy is transferred from the carotenoid and chlorophyll C (or B) to chlorophyll A and the photosynthetic reaction centers where it is used to synthesize ATP and reducing power. This Macrocystis pyrifera (Giant kelp) protein is Fucoxanthin-chlorophyll a-c binding protein A, chloroplastic (FCPA).